The sequence spans 232 residues: Orotate phosphoribosyltransferase (232 aa).

Residues R107, K108, K111, H113, and 133–141 (EDLTTAGGS) each bind 5-phospho-alpha-D-ribose 1-diphosphate. Position 137 (T137) interacts with orotate.

The protein belongs to the purine/pyrimidine phosphoribosyltransferase family. PyrE subfamily. Homodimer. Mg(2+) serves as cofactor.

The catalysed reaction is orotidine 5'-phosphate + diphosphate = orotate + 5-phospho-alpha-D-ribose 1-diphosphate. It participates in pyrimidine metabolism; UMP biosynthesis via de novo pathway; UMP from orotate: step 1/2. Catalyzes the transfer of a ribosyl phosphate group from 5-phosphoribose 1-diphosphate to orotate, leading to the formation of orotidine monophosphate (OMP). This chain is Orotate phosphoribosyltransferase, found in Rhizobium meliloti (strain 1021) (Ensifer meliloti).